The primary structure comprises 394 residues: uncharacterized protein (394 aa).

The next 12 membrane-spanning stretches (helical) occupy residues 13 to 33 (LITT…TTMI), 35 to 55 (MAPT…VLPT), 73 to 95 (TTMT…TLTV), 110 to 130 (ALTV…HMVL), 152 to 172 (IHMV…PTVL), 179 to 198 (LMVL…TLTV), 216 to 236 (VLLA…TVLP), 241 to 261 (VLMV…HMVL), 267 to 287 (VLMV…PTVL), 293 to 313 (VLMV…TLTV), 340 to 360 (MMTL…VTTI), and 372 to 392 (ILLC…YVSA).

The protein localises to the membrane. This is an uncharacterized protein from Saccharomyces cerevisiae (strain ATCC 204508 / S288c) (Baker's yeast).